A 222-amino-acid polypeptide reads, in one-letter code: Eukaryotic translation initiation factor 3 subunit K (222 aa).

Residues 46–208 enclose the PCI domain; sequence YDLEANLAVL…KIKTKNITEK (163 aa).

Belongs to the eIF-3 subunit K family. As to quaternary structure, component of the eukaryotic translation initiation factor 3 (eIF-3) complex. The eIF-3 complex interacts with pix.

The protein localises to the cytoplasm. Component of the eukaryotic translation initiation factor 3 (eIF-3) complex, which is involved in protein synthesis of a specialized repertoire of mRNAs and, together with other initiation factors, stimulates binding of mRNA and methionyl-tRNAi to the 40S ribosome. The eIF-3 complex specifically targets and initiates translation of a subset of mRNAs involved in cell proliferation. This Drosophila erecta (Fruit fly) protein is Eukaryotic translation initiation factor 3 subunit K.